The chain runs to 499 residues: Spore germination protein GerQA (499 aa).

3 helical membrane-spanning segments follow: residues 285–305, 376–396, and 409–429; these read LFAF…LTYH, SNVL…APIY, and FIIS…SLLL.

The protein belongs to the GerABKA family.

The protein resides in the membrane. Functionally, required for the germination response to inosine. Has no role in L-alanine germination. This chain is Spore germination protein GerQA (gerQA), found in Bacillus cereus.